We begin with the raw amino-acid sequence, 155 residues long: Xanthine-guanine phosphoribosyltransferase (155 aa).

5-phospho-alpha-D-ribose 1-diphosphate is bound by residues 37–38 (RG), Arg69, and 90–98 (DDLVDTGGT). A GMP-binding site is contributed by Arg69. Residue Asp91 coordinates Mg(2+). Asp94 and Ile137 together coordinate guanine. Xanthine contacts are provided by Asp94 and Ile137. Residues 94-98 (DTGGT) and 136-137 (WI) each bind GMP.

Belongs to the purine/pyrimidine phosphoribosyltransferase family. XGPT subfamily. Homotetramer. Mg(2+) serves as cofactor.

The protein resides in the cell inner membrane. The catalysed reaction is GMP + diphosphate = guanine + 5-phospho-alpha-D-ribose 1-diphosphate. The enzyme catalyses XMP + diphosphate = xanthine + 5-phospho-alpha-D-ribose 1-diphosphate. It catalyses the reaction IMP + diphosphate = hypoxanthine + 5-phospho-alpha-D-ribose 1-diphosphate. Its pathway is purine metabolism; GMP biosynthesis via salvage pathway; GMP from guanine: step 1/1. It functions in the pathway purine metabolism; XMP biosynthesis via salvage pathway; XMP from xanthine: step 1/1. Functionally, purine salvage pathway enzyme that catalyzes the transfer of the ribosyl-5-phosphate group from 5-phospho-alpha-D-ribose 1-diphosphate (PRPP) to the N9 position of the 6-oxopurines guanine and xanthine to form the corresponding ribonucleotides GMP (guanosine 5'-monophosphate) and XMP (xanthosine 5'-monophosphate), with the release of PPi. To a lesser extent, also acts on hypoxanthine. The chain is Xanthine-guanine phosphoribosyltransferase from Aeromonas salmonicida (strain A449).